Reading from the N-terminus, the 266-residue chain is Glucosamine-6-phosphate deaminase (266 aa).

D72 functions as the Proton acceptor; for enolization step in the catalytic mechanism. D141 acts as the For ring-opening step in catalysis. H143 serves as the catalytic Proton acceptor; for ring-opening step. E148 serves as the catalytic For ring-opening step.

Belongs to the glucosamine/galactosamine-6-phosphate isomerase family. NagB subfamily. Homohexamer.

It carries out the reaction alpha-D-glucosamine 6-phosphate + H2O = beta-D-fructose 6-phosphate + NH4(+). The protein operates within amino-sugar metabolism; N-acetylneuraminate degradation; D-fructose 6-phosphate from N-acetylneuraminate: step 5/5. Its activity is regulated as follows. Allosterically activated by N-acetylglucosamine 6-phosphate (GlcNAc6P). Catalyzes the reversible isomerization-deamination of glucosamine 6-phosphate (GlcN6P) to form fructose 6-phosphate (Fru6P) and ammonium ion. The chain is Glucosamine-6-phosphate deaminase from Klebsiella pneumoniae (strain 342).